Here is a 92-residue protein sequence, read N- to C-terminus: MSLPSLDSVPMLRRGFRFQFEPAQDCHVLLYPEGMVKLNDSAGEILKLVDGRRDVAAIVAALRERFPEVPGIDEDILAFLEVAHAQFWIELQ.

This sequence belongs to the PqqD family. As to quaternary structure, monomer. Interacts with PqqE.

The protein operates within cofactor biosynthesis; pyrroloquinoline quinone biosynthesis. Its function is as follows. Functions as a PqqA binding protein and presents PqqA to PqqE, in the pyrroloquinoline quinone (PQQ) biosynthetic pathway. This Pseudomonas aeruginosa (strain UCBPP-PA14) protein is PqqA binding protein.